The chain runs to 889 residues: Cytoplasmic aconitate hydratase (889 aa).

Substrate is bound by residues glutamine 86 and 205–207; that span reads DSH. The [4Fe-4S] cluster site is built by cysteine 437, cysteine 503, and cysteine 506. Substrate is bound by residues arginine 536, arginine 541, arginine 699, and 779–780; that span reads SR.

The protein belongs to the aconitase/IPM isomerase family. Interacts (when associated with the 4Fe-4S) with FBXL5. Interacts with frataxin(81-210). [4Fe-4S] cluster serves as cofactor.

Its subcellular location is the cytoplasm. The protein resides in the cytosol. The catalysed reaction is citrate = D-threo-isocitrate. Its function is as follows. Bifunctional iron sensor that switches between 2 activities depending on iron availability. Iron deprivation, promotes its mRNA binding activity through which it regulates the expression of genes involved in iron uptake, sequestration and utilization. Binds to iron-responsive elements (IRES) in the untranslated region of target mRNAs preventing for instance the translation of ferritin and aminolevulinic acid synthase and stabilizing the transferrin receptor mRNA. In terms of biological role, conversely, when cellular iron levels are high, binds a 4Fe-4S cluster which precludes RNA binding activity and promotes the aconitase activity, the isomerization of citrate to isocitrate via cis-aconitate. This Oryctolagus cuniculus (Rabbit) protein is Cytoplasmic aconitate hydratase (ACO1).